We begin with the raw amino-acid sequence, 415 residues long: MELRVGNRYRLGRKIGSGSFGDIYLGTDIAASEEVAIKLECVKTKHPQLHIESKIYKMMQGGVGIPTIKWCGAEGDYNVMVMELLGPSLEDLFNFCSRKFSLKTVLLLADQMISRIEYIHSKNFIHRDVKPDNFLMGLGKKGNLVYIIDFGLAKKYRDARTHQHIPYRENKNLTGTARYASINTHLGIEQSRRDDLESLGYVLMYFNLGSLPWQGLKAATKRQKYERISEKKMSTPIEVLCKGYPSEFATYLNFCRSLRFDDKPDYSYLRQLFRNLFHRQGFSYDYVFDWNMLKFGASRAAEDAERERREREERLRHTRNPAVRGLPSTASGRLRGTQEVTPSTPLTPTSHTANTSPRPVSGMERERKVSMRLHRGAPVNVSSSDLTSRQDTSRMSTSQIPSRVTSSGLPSTVHR.

The Protein kinase domain maps to Tyr-9–Phe-277. ATP contacts are provided by residues Ile-15 to Ile-23 and Lys-38. Residue Asp-128 is the Proton acceptor of the active site. Positions Ala-301–Leu-315 are enriched in basic and acidic residues. The tract at residues Ala-301–Arg-415 is disordered. The segment at His-317–Pro-342 is autoinhibitory. Positions Thr-341–Thr-352 are enriched in low complexity. Polar residues predominate over residues Asn-380–Arg-415.

It belongs to the protein kinase superfamily. In terms of assembly, monomer. Interacts with per1 and per2. Component of the circadian core oscillator. Autophosphorylated on serine and threonine residues. As to expression, detected in retina photoreceptor cells.

Its subcellular location is the cytoplasm. The protein resides in the nucleus. The enzyme catalyses L-seryl-[protein] + ATP = O-phospho-L-seryl-[protein] + ADP + H(+). It carries out the reaction L-threonyl-[protein] + ATP = O-phospho-L-threonyl-[protein] + ADP + H(+). The catalysed reaction is L-seryl-[tau protein] + ATP = O-phospho-L-seryl-[tau protein] + ADP + H(+). It catalyses the reaction L-threonyl-[tau protein] + ATP = O-phospho-L-threonyl-[tau protein] + ADP + H(+). Its activity is regulated as follows. Exhibits substrate-dependent heparin activation. Functionally, casein kinases are operationally defined by their preferential utilization of acidic proteins such as caseins as substrates. Can phosphorylate a large number of proteins. Central component of the circadian clock. May act as a negative regulator of circadian rhythmicity by phosphorylating per1 and per2, which may lead to their degradation. Participates in wnt signaling. Has no kinase activity. In Xenopus laevis (African clawed frog), this protein is Casein kinase I isoform delta (csnk1d).